The primary structure comprises 156 residues: ATP synthase subunit b (156 aa).

The chain crosses the membrane as a helical span at residues 7–29; that stretch reads LLGQAIAFALFVWFCMKYVWPPI.

It belongs to the ATPase B chain family. As to quaternary structure, F-type ATPases have 2 components, F(1) - the catalytic core - and F(0) - the membrane proton channel. F(1) has five subunits: alpha(3), beta(3), gamma(1), delta(1), epsilon(1). F(0) has three main subunits: a(1), b(2) and c(10-14). The alpha and beta chains form an alternating ring which encloses part of the gamma chain. F(1) is attached to F(0) by a central stalk formed by the gamma and epsilon chains, while a peripheral stalk is formed by the delta and b chains.

The protein resides in the cell inner membrane. F(1)F(0) ATP synthase produces ATP from ADP in the presence of a proton or sodium gradient. F-type ATPases consist of two structural domains, F(1) containing the extramembraneous catalytic core and F(0) containing the membrane proton channel, linked together by a central stalk and a peripheral stalk. During catalysis, ATP synthesis in the catalytic domain of F(1) is coupled via a rotary mechanism of the central stalk subunits to proton translocation. Functionally, component of the F(0) channel, it forms part of the peripheral stalk, linking F(1) to F(0). The sequence is that of ATP synthase subunit b from Aliivibrio salmonicida (strain LFI1238) (Vibrio salmonicida (strain LFI1238)).